The chain runs to 301 residues: Protease HtpX homolog (301 aa).

The next 2 helical transmembrane spans lie at 11-31 (VLLL…IAGA) and 34-54 (NSAF…YSYW). His-138 provides a ligand contact to Zn(2+). Glu-139 is a catalytic residue. Zn(2+) is bound at residue His-142. A run of 2 helical transmembrane segments spans residues 154-174 (AAAV…AAIF) and 188-208 (LVGL…QLAI). Glu-213 lines the Zn(2+) pocket.

This sequence belongs to the peptidase M48B family. Zn(2+) serves as cofactor.

The protein resides in the cell membrane. In Kocuria rhizophila (strain ATCC 9341 / DSM 348 / NBRC 103217 / DC2201), this protein is Protease HtpX homolog.